The primary structure comprises 157 residues: Dihydrofolate reductase type 1 (157 aa).

A DHFR domain is found at Lys-2–Lys-156.

The protein belongs to the dihydrofolate reductase family. Homodimer.

It carries out the reaction (6S)-5,6,7,8-tetrahydrofolate + NADP(+) = 7,8-dihydrofolate + NADPH + H(+). It participates in cofactor biosynthesis; tetrahydrofolate biosynthesis; 5,6,7,8-tetrahydrofolate from 7,8-dihydrofolate: step 1/1. Functionally, key enzyme in folate metabolism. Catalyzes an essential reaction for de novo glycine and purine synthesis, and for DNA precursor synthesis. The sequence is that of Dihydrofolate reductase type 1 (dhfrI) from Escherichia coli.